The chain runs to 282 residues: N-methyltransferase gliN (282 aa).

The protein belongs to the methyltransferase superfamily. LaeA methyltransferase family.

The protein operates within mycotoxin biosynthesis. In terms of biological role, N-methyltransferase; part of the gene cluster that mediates the biosynthesis of gliotoxin, a member of the epipolythiodioxopiperazine (ETP) class of toxins characterized by a disulfide bridged cyclic dipeptide. The first step in gliotoxin biosynthesis is the condensation of serine and phenylalanine to form the cyclo-L-phenylalanyl-L-serine diketopiperazine (DKP) by the NRPS gliP. GliP is also able to produce the DKP cyclo-L-tryptophanyl-L-serine, suggesting that the substrate specificity of the first adenylation (A) domain in gliP is sufficiently relaxed to accommodate both L-Phe and L-Trp. The cytochrome P450 monooxygenase gliC has been shown to catalyze the subsequent hydroxylation of the alpha-carbon of L-Phe in cyclo-L-phenylalanyl-L-serine whereas the second cytochrome P450 enzyme, gliF, is presumably involved in the modification of the DKP side chain. The glutathione S-transferase (GST) gliG then forms a bis-glutathionylated biosynthetic intermediate which is responsible for the sulfurization of gliotoxin. This bis-glutathionylated intermediate is subsequently processed by the gamma-glutamyl cyclotransferase gliK to remove both gamma-glutamyl moieties. Subsequent processing via gliI yields a biosynthetic intermediate, which is N-methylated via the N-methyltransferase gliN, before the gliotoxin oxidoreductase gliT-mediated disulfide bridge closure. GliN-mediated amide methylation confers stability to ETP, damping the spontaneous formation of tri- and tetrasulfides. Intracellular dithiol gliotoxin oxidized by gliT is subsequently effluxed by gliA. Gliotoxin contributes to pathogenesis during invasive aspergillosis. In macrophages and neutrophils, gliotoxin showed inhibition of various different cell functions including cytokine production, antigen presentation, phagocytosis, and production of reactive oxygen species. The chain is N-methyltransferase gliN from Aspergillus fumigatus (strain ATCC MYA-4609 / CBS 101355 / FGSC A1100 / Af293) (Neosartorya fumigata).